Reading from the N-terminus, the 117-residue chain is Minor capsid protein p17 (117 aa).

Asparagine 12 carries N-linked (GlcNAc...) asparagine; by host glycosylation. A helical transmembrane segment spans residues 39–59 (AILLGILILLVIILIIVAIVY). The interval 96-117 (KNSTSQQSHIPSDEQLAELAHS) is disordered. Asparagine 97 carries an N-linked (GlcNAc...) asparagine; by host glycan.

The protein belongs to the asfivirus minor capsid protein p17 family. As to quaternary structure, interacts with the minor capsid protein M1249L and with the hexon capsid protein p72 capsomers; these interactions form a rigid zipper structure that stabilizes the capsomers. Interacts with host STING1.

Its subcellular location is the virion membrane. It is found in the host endoplasmic reticulum membrane. In terms of biological role, together with the penton and the other minor capsid proteins (M1249L, p49), forms a complicated network immediately below the outer capsid shell, stabilizing the whole capsid. Three copies of p17 encircle each p72 capsomer in the inner capsid shell, anchoring p72 capsomers on the inner membrane. Required for the assembly of the capsid and icosahedral morphogenesis. Additionally, inhibits the host cGAS-STING pathway through its interaction with STING1 and subsequent interference of the recruitment of downstream components TBK1 and IKBKE. This chain is Minor capsid protein p17, found in African swine fever virus (isolate Warthog/Namibia/Wart80/1980) (ASFV).